We begin with the raw amino-acid sequence, 693 residues long: Lamina-associated polypeptide 2, isoforms alpha/zeta (693 aa).

The LEM-like domain occupies 5 to 48; the sequence is LEDPSVLTKDKLKSELVANNVTLPAGEQRKDVYVQLYLQHLTAR. Disordered stretches follow at residues 48 to 113, 148 to 211, and 227 to 270; these read RNRP…DVTE, LREQ…LAST, and TRPP…KLAP. The tract at residues 49 to 107 is linker; that stretch reads NRPPLAAGANSKGPPDFSSDEEREPTPVLGSGASVGRGRGAVGRKATKKTDKPRLEDKD. 3 positions are modified to phosphoserine: Ser59, Ser66, and Ser67. Position 74 is a phosphothreonine (Thr74). Phosphoserine is present on residues Ser79 and Ser82. Omega-N-methylarginine occurs at positions 85 and 87. Positions 96 to 105 are enriched in basic and acidic residues; it reads KKTDKPRLED. The LEM domain maps to 108–152; it reads DLDVTELSNEELLDQLVRYGVNPGPIVGTTRKLYEKKLLKLREQG. Position 153 is a phosphothreonine (Thr153). Positions 154-177 are enriched in polar residues; that stretch reads ESRSSTPLPTVSSSAENTRQNGSN. 2 positions are modified to phosphoserine: Ser155 and Ser158. Thr159 and Thr163 each carry phosphothreonine. Ser165 and Ser167 each carry phosphoserine. The span at 178-190 shows a compositional bias: basic and acidic residues; sequence DSDRYSDNDEGKK. The Nuclear localization signal motif lies at 190–196; that stretch reads KKEHKKV. The residue at position 206 (Ser206) is an N6-acetyllysine. Basic and acidic residues predominate over residues 245 to 254; the sequence is TKRDPPRETC. Ser310 carries the post-translational modification Phosphoserine. Arg329 carries the post-translational modification Omega-N-methylarginine. The disordered stretch occupies residues 332–351; that stretch reads KSRAQPLRAEEPGVSDQSVF. Phosphoserine occurs at positions 349, 352, 368, 420, and 422. Positions 412-422 are enriched in low complexity; sequence QSSYQDSESLS. Positions 412–442 are disordered; the sequence is QSSYQDSESLSPPRKVPRLSEKPARGGDSGS. Residues 557 to 656 are a coiled coil; that stretch reads TESCDKHLDL…MGRRYLWLKD (100 aa). Residue Lys655 is modified to N6-acetyllysine.

Belongs to the LEM family. Homooligomer. Interacts with LMNA, BANF1 and RB1 and with chromosomes. Associates directly or indirectly with lamins at specific cell-cycle stages. Interacts with CMTM6. Post-translationally, phosphorylated in a mitose-specific manner.

The protein localises to the nucleus. It is found in the chromosome. In terms of biological role, may be involved in the structural organization of the nucleus and in the post-mitotic nuclear assembly. Plays an important role, together with LMNA, in the nuclear anchorage of RB1. The sequence is that of Lamina-associated polypeptide 2, isoforms alpha/zeta (Tmpo) from Mus musculus (Mouse).